An 86-amino-acid polypeptide reads, in one-letter code: RNA-binding protein Hfq (86 aa).

Positions 9–68 (DIFLNVLRRERIQVSIYLFNGIKLQGHIESFDQFVIVLKNTISQMVYKHAVSTIVPSKFV) constitute a Sm domain.

The protein belongs to the Hfq family. Homohexamer.

Its function is as follows. RNA chaperone that binds small regulatory RNA (sRNAs) and mRNAs to facilitate mRNA translational regulation in response to envelope stress, environmental stress and changes in metabolite concentrations. Also binds with high specificity to tRNAs. The sequence is that of RNA-binding protein Hfq from Baumannia cicadellinicola subsp. Homalodisca coagulata.